Consider the following 215-residue polypeptide: MASERQYSPVDRLLLQADAALRTLLPFSGASSRPSPAIVQAETDLNPEESRHIAGLMRINHTGEVCAQALYQGQALTAKLPEVRSAMEHAADEEIDHLAWCEQRIRELGSHPSVLNPLFYGLSFGVGAVAGLVSDRVSLGFVAATEDQVCKHLDEHLEQIPEHDAKSRAILEQMRIDEEQHANSALAAGGVRFPAPVKFGMTLLSKVMTKSTYRI.

Residues glutamate 64, glutamate 94, histidine 97, glutamate 146, glutamate 178, and histidine 181 each coordinate Fe cation.

Belongs to the COQ7 family. Fe cation serves as cofactor.

It localises to the cell membrane. The enzyme catalyses a 5-methoxy-2-methyl-3-(all-trans-polyprenyl)benzene-1,4-diol + AH2 + O2 = a 3-demethylubiquinol + A + H2O. It participates in cofactor biosynthesis; ubiquinone biosynthesis. Catalyzes the hydroxylation of 2-nonaprenyl-3-methyl-6-methoxy-1,4-benzoquinol during ubiquinone biosynthesis. In Ectopseudomonas mendocina (strain ymp) (Pseudomonas mendocina), this protein is 3-demethoxyubiquinol 3-hydroxylase.